The chain runs to 245 residues: Sugar fermentation stimulation protein homolog (245 aa).

Belongs to the SfsA family.

This is Sugar fermentation stimulation protein homolog from Yersinia pestis bv. Antiqua (strain Nepal516).